Here is a 124-residue protein sequence, read N- to C-terminus: Large ribosomal subunit protein bL20c (124 aa).

Belongs to the bacterial ribosomal protein bL20 family.

The protein localises to the plastid. Its subcellular location is the chloroplast. Its function is as follows. Binds directly to 23S ribosomal RNA and is necessary for the in vitro assembly process of the 50S ribosomal subunit. It is not involved in the protein synthesizing functions of that subunit. This chain is Large ribosomal subunit protein bL20c, found in Stigeoclonium helveticum (Green alga).